We begin with the raw amino-acid sequence, 243 residues long: Probable fructoselysine utilization operon transcriptional repressor (243 aa).

The 69-residue stretch at 10–78 folds into the HTH gntR-type domain; sequence QLLYATVRQR…QGKGTFVQSQ (69 aa). The segment at residues 38–57 is a DNA-binding region (H-T-H motif); the sequence is ENELCTQYNVSRITIRKAIS.

Its pathway is carbohydrate metabolism; fructoselysine degradation [regulation]. Functionally, may regulate the transcription of the frlABCDR operon, involved in the utilization of fructoselysine and psicoselysine. In Shigella flexneri, this protein is Probable fructoselysine utilization operon transcriptional repressor (frlR).